Here is a 207-residue protein sequence, read N- to C-terminus: Small ribosomal subunit protein uS2 (207 aa).

The protein belongs to the universal ribosomal protein uS2 family.

The protein is Small ribosomal subunit protein uS2 of Methanocella arvoryzae (strain DSM 22066 / NBRC 105507 / MRE50).